We begin with the raw amino-acid sequence, 800 residues long: Putative antiporter subunit mnhA2 (800 aa).

A run of 20 helical transmembrane segments spans residues 1-21, 33-53, 78-98, 118-138, 167-187, 207-227, 241-261, 273-293, 300-320, 331-351, 387-407, 424-444, 472-492, 527-547, 595-615, 627-647, 651-671, 676-696, 712-732, and 768-788; these read MSLV…LLMS, IALV…PSVA, GLSL…FFYA, LFMF…MYIF, FMIT…LYIM, GLFI…SAQF, TPVS…FLLL, YVYI…ITAL, GILA…VGIG, IASI…NHAI, LVMT…GFLS, FSLI…VFTF, PWLF…IFFV, GFNI…VLAI, IIMT…RIGL, GALE…LIFI, LTMV…FIAM, LALT…VSFS, IIKI…IFIT, and LDTL…YTLL.

The protein belongs to the CPA3 antiporters (TC 2.A.63) subunit A family. In terms of assembly, may form a heterooligomeric complex that consists of seven subunits: mnhA2, mnhB2, mnhC2, mnhD2, mnhE2, mnhF2 and mnhG2.

It is found in the cell membrane. The sequence is that of Putative antiporter subunit mnhA2 (mnhA2) from Staphylococcus aureus (strain USA300).